We begin with the raw amino-acid sequence, 313 residues long: Type I restriction enzyme EcoprrI endonuclease subunit (313 aa).

Belongs to the HsdR family. In terms of assembly, the type I restriction/modification system is composed of three polypeptides R, M and S; the restriction enzyme has stoichiometry R(2)M(2)S(1) while the methyltransferase is M(2)S(1).

It catalyses the reaction Endonucleolytic cleavage of DNA to give random double-stranded fragments with terminal 5'-phosphates, ATP is simultaneously hydrolyzed.. Functionally, the subtype C restriction (R) subunit of a type I restriction enzyme that recognizes 5'-CCAN(7)RTGC-3' and cleaves a random distance away. The R subunit is required for both endonuclease and ATPase activities but not for modification. Cleaves only non-methylated DNA, hemi-methylated and fully methylated DNA are not substrates. After locating a non-methylated recognition site, the enzyme complex serves as a molecular motor that translocates DNA in an ATP-dependent manner until a collision occurs that triggers cleavage. The prr locus restricts phage T4 mutants lacking polynucleotide kinase or RNA ligase; T4 mutants lacking these genes manifest a T4-induced anticodon nuclease (ACNase). This is a putative 'masking-agent' for the ACNase encoded by prrC. It is thought that Stp and other T4-encoded ACNase factors counteract the masking agents, thus activating the latent ACNase. This Escherichia coli protein is Type I restriction enzyme EcoprrI endonuclease subunit.